A 131-amino-acid polypeptide reads, in one-letter code: Small ribosomal subunit protein uS11 (131 aa).

Belongs to the universal ribosomal protein uS11 family. In terms of assembly, part of the 30S ribosomal subunit. Interacts with proteins S7 and S18. Binds to IF-3.

Located on the platform of the 30S subunit, it bridges several disparate RNA helices of the 16S rRNA. Forms part of the Shine-Dalgarno cleft in the 70S ribosome. The protein is Small ribosomal subunit protein uS11 of Helicobacter acinonychis (strain Sheeba).